A 591-amino-acid polypeptide reads, in one-letter code: Metalloendopeptidase OPG085 (591 aa).

H41 provides a ligand contact to Zn(2+). The active site involves E44. The Zn(2+) site is built by H45 and E112.

This sequence belongs to the peptidase M44 family. The cofactor is Zn(2+). In terms of processing, undergoes proteolytic processing during the course of infection. May be cleaved into 46 kDa and 22 kDa products (Potential).

It is found in the virion. In terms of biological role, probably involved in maturation of some viral proteins by processing them preferentially at Ala-Gly-|-Ser/Thr/Lys motifs. Does not seem to be responsible for the cleavage of major core proteins. The sequence is that of Metalloendopeptidase OPG085 (OPG085) from Homo sapiens (Human).